The primary structure comprises 139 residues: MAMTYHLDVVSAEQQMFSGLVEKIQVTGSEGELGIYPGHAPLLTAIKPGMIRIVKQHGHEEFIYLSGGILEVQLGNVTVLADTAIRGQDLDEARAMEAKRKAEEHISSSHGDVDYAQASAELAKAIAQLRVIELTKKAM.

This sequence belongs to the ATPase epsilon chain family. F-type ATPases have 2 components, CF(1) - the catalytic core - and CF(0) - the membrane proton channel. CF(1) has five subunits: alpha(3), beta(3), gamma(1), delta(1), epsilon(1). CF(0) has three main subunits: a, b and c.

The protein resides in the cell inner membrane. In terms of biological role, produces ATP from ADP in the presence of a proton gradient across the membrane. The chain is ATP synthase epsilon chain (atpC) from Escherichia coli O157:H7.